A 625-amino-acid polypeptide reads, in one-letter code: Phosphomethylpyrimidine synthase (625 aa).

Substrate-binding positions include Asn-231, Met-260, Tyr-289, His-325, 345-347, 386-389, and Glu-425; these read SRG and DGLR. His-429 lines the Zn(2+) pocket. Tyr-452 is a substrate binding site. Zn(2+) is bound at residue His-493. 3 residues coordinate [4Fe-4S] cluster: Cys-573, Cys-576, and Cys-581.

The protein belongs to the ThiC family. In terms of assembly, homodimer. Requires [4Fe-4S] cluster as cofactor.

The catalysed reaction is 5-amino-1-(5-phospho-beta-D-ribosyl)imidazole + S-adenosyl-L-methionine = 4-amino-2-methyl-5-(phosphooxymethyl)pyrimidine + CO + 5'-deoxyadenosine + formate + L-methionine + 3 H(+). It functions in the pathway cofactor biosynthesis; thiamine diphosphate biosynthesis. In terms of biological role, catalyzes the synthesis of the hydroxymethylpyrimidine phosphate (HMP-P) moiety of thiamine from aminoimidazole ribotide (AIR) in a radical S-adenosyl-L-methionine (SAM)-dependent reaction. The polypeptide is Phosphomethylpyrimidine synthase (Acinetobacter baumannii (strain AB0057)).